The chain runs to 1000 residues: Vacuolar protein-sorting protein bro1 (1000 aa).

A BRO1 domain is found at 5–406 (PMISCPLKQT…EKVETADGEM (402 aa)). Positions 732–793 (YAEMTETVDS…RQLMERLSTE (62 aa)) form a coiled coil. Disordered regions lie at residues 760 to 857 (LLGQ…PYSQ) and 891 to 1000 (PIPA…NAWK). Over residues 764–792 (IEREKAAGTSDHEEREREKLRQLMERLST) the composition is skewed to basic and acidic residues. Over residues 840–849 (VPQQHGTPVS) the composition is skewed to polar residues. Composition is skewed to pro residues over residues 898–922 (SPPPSQPFYSPTPTPFYTSPTPPVP) and 931–954 (YVPPPPPPRPQQPTYPPSTGPFPS). Polar residues predominate over residues 981 to 991 (TGPSVSANSSD).

Belongs to the BRO1 family.

Its subcellular location is the cytoplasm. The protein resides in the endosome. Functionally, involved in concentration and sorting of cargo proteins of the multivesicular body (MVB) for incorporation into intralumenal vesicles. The chain is Vacuolar protein-sorting protein bro1 (broA) from Emericella nidulans (strain FGSC A4 / ATCC 38163 / CBS 112.46 / NRRL 194 / M139) (Aspergillus nidulans).